Reading from the N-terminus, the 762-residue chain is Mitochondrial intermediate peptidase (762 aa).

A mitochondrion-targeting transit peptide spans 1 to 28 (MQVRTLLTLGKKKVIGNRQCILSLYRKY). Position 544 (histidine 544) interacts with Zn(2+). Residue glutamate 545 is part of the active site. The Zn(2+) site is built by histidine 548 and histidine 551.

The protein belongs to the peptidase M3 family. The cofactor is Zn(2+).

It localises to the mitochondrion matrix. The enzyme catalyses Release of an N-terminal octapeptide as second stage of processing of some proteins imported into the mitochondrion.. Functionally, cleaves proteins, imported into the mitochondrion, to their mature size. While most mitochondrial precursor proteins are processed to the mature form in one step by mitochondrial processing peptidase (MPP), the sequential cleavage by MIP of an octapeptide after initial processing by MPP is a required step for a subgroup of nuclear-encoded precursor proteins destined for the matrix or the inner membrane. In Schizosaccharomyces pombe (strain 972 / ATCC 24843) (Fission yeast), this protein is Mitochondrial intermediate peptidase (oct1).